The primary structure comprises 142 residues: Cell wall-binding protein YqgA (142 aa).

Residues 1–28 form the signal peptide; it reads MKQGKFSVFLILLLMLTLVVAPKEKAEA.

Found in a complex with F(1)F(0) ATP synthase and SpoIIIJ and YqjG.

It is found in the secreted. The protein resides in the cell wall. The sequence is that of Cell wall-binding protein YqgA (yqgA) from Bacillus subtilis (strain 168).